A 191-amino-acid chain; its full sequence is dTTP/UTP pyrophosphatase (191 aa).

Asp-70 (proton acceptor) is an active-site residue.

The protein belongs to the Maf family. YhdE subfamily. It depends on a divalent metal cation as a cofactor.

It is found in the cytoplasm. The enzyme catalyses dTTP + H2O = dTMP + diphosphate + H(+). It carries out the reaction UTP + H2O = UMP + diphosphate + H(+). In terms of biological role, nucleoside triphosphate pyrophosphatase that hydrolyzes dTTP and UTP. May have a dual role in cell division arrest and in preventing the incorporation of modified nucleotides into cellular nucleic acids. The protein is dTTP/UTP pyrophosphatase of Clostridium novyi (strain NT).